The chain runs to 1154 residues: Kinesin-like protein KIN-7E, chloroplastic (1154 aa).

2 stretches are compositionally biased toward low complexity: residues 1–14 (MSSSSRPGRASISP) and 29–109 (VAAA…PPVA). The transit peptide at 1-21 (MSSSSRPGRASISPFRSRRTS) directs the protein to the chloroplast. The disordered stretch occupies residues 1–109 (MSSSSRPGRA…RAAGRAPPVA (109 aa)). A Kinesin motor domain is found at 119-437 (NIMVTVRFRP…LKFAHRSKHI (319 aa)). Residue 199–206 (GVTSSGKT) coordinates ATP. Residues 441–523 (ASQNKIIDEK…AALMGRIQRL (83 aa)) adopt a coiled-coil conformation. The segment at 620–674 (LSTSVDSESTASGSPSFSRSSQQKHPLLDLKDGRRKSMTRKGDDPALTDSFPGRT) is disordered. The segment covering 628–640 (STASGSPSFSRSS) has biased composition (low complexity). 2 coiled-coil regions span residues 734–761 (DSQIQEQIEKLKNEIDEKKSHIRVLEQR) and 801–845 (ADNR…DNVA). The interval 838–885 (AKNEDNVASMQSSEPSSTSSNPRDLANEVASHSKMPSRTTEDHTESPL) is disordered. Low complexity predominate over residues 846–857 (SMQSSEPSSTSS). The stretch at 894–967 (AEIENLKLDK…DLAAAKDQTR (74 aa)) forms a coiled coil.

It belongs to the TRAFAC class myosin-kinesin ATPase superfamily. Kinesin family. KIN-7 subfamily.

The protein resides in the plastid. It localises to the chloroplast. The sequence is that of Kinesin-like protein KIN-7E, chloroplastic from Oryza sativa subsp. japonica (Rice).